We begin with the raw amino-acid sequence, 463 residues long: Fumarate hydratase class II (463 aa).

Substrate contacts are provided by residues 97-99 (SGT), Arg-125, 128-131 (HPND), 138-140 (SSN), and Thr-186. Residues 121-134 (RGEGRKVHPNDHVN) show a composition bias toward basic and acidic residues. The interval 121–142 (RGEGRKVHPNDHVNRGQSSNDT) is disordered. The active-site Proton donor/acceptor is the His-187. Residue Ser-317 is part of the active site. Substrate is bound by residues Ser-318 and 323–325 (KVN).

This sequence belongs to the class-II fumarase/aspartase family. Fumarase subfamily. In terms of assembly, homotetramer.

It localises to the cytoplasm. It carries out the reaction (S)-malate = fumarate + H2O. The protein operates within carbohydrate metabolism; tricarboxylic acid cycle; (S)-malate from fumarate: step 1/1. Involved in the TCA cycle. Catalyzes the stereospecific interconversion of fumarate to L-malate. This is Fumarate hydratase class II from Bordetella bronchiseptica (strain ATCC BAA-588 / NCTC 13252 / RB50) (Alcaligenes bronchisepticus).